Consider the following 753-residue polypeptide: Cytoplasmic polyadenylation element-binding protein 3 (753 aa).

The segment at 111 to 286 is disordered; that stretch reads VGESTPSSAG…NGSWHGELPP (176 aa). 2 stretches are compositionally biased toward basic and acidic residues: residues 131–142 and 175–188; these read KPTEKISVDEPP and FGKE…EVVK. Residues 227 to 239 show a composition bias toward low complexity; sequence SPAKISSNSSSSS. Positions 265–279 are enriched in polar residues; sequence SRQGLSNRDNLSNGS. One can recognise an RRM domain in the interval 298 to 320; that stretch reads IFVGGVPWDITEAALKDSFGEFG. Positions 567-589 are disordered; that stretch reads KAYAGPHRRPHLTSNSLSKSHGC. Residues 578–589 show a composition bias toward polar residues; that stretch reads LTSNSLSKSHGC.

In terms of biological role, cytoplasmic polyadenylation element binding protein that binds to and regulates the translation of specific mRNAs. The polypeptide is Cytoplasmic polyadenylation element-binding protein 3 (cpb-3) (Caenorhabditis briggsae).